The following is a 251-amino-acid chain: Pyridoxine 5'-phosphate synthase (251 aa).

Asn7 is a binding site for 3-amino-2-oxopropyl phosphate. A 1-deoxy-D-xylulose 5-phosphate-binding site is contributed by 9–10; sequence DH. Residue Arg18 coordinates 3-amino-2-oxopropyl phosphate. Residue His43 is the Proton acceptor of the active site. Arg45 and His50 together coordinate 1-deoxy-D-xylulose 5-phosphate. The Proton acceptor role is filled by Glu70. A 1-deoxy-D-xylulose 5-phosphate-binding site is contributed by Thr100. His198 functions as the Proton donor in the catalytic mechanism. Residues Ala199 and 220 to 221 each bind 3-amino-2-oxopropyl phosphate; that span reads GH.

This sequence belongs to the PNP synthase family. As to quaternary structure, homooctamer; tetramer of dimers.

It is found in the cytoplasm. The catalysed reaction is 3-amino-2-oxopropyl phosphate + 1-deoxy-D-xylulose 5-phosphate = pyridoxine 5'-phosphate + phosphate + 2 H2O + H(+). Its pathway is cofactor biosynthesis; pyridoxine 5'-phosphate biosynthesis; pyridoxine 5'-phosphate from D-erythrose 4-phosphate: step 5/5. In terms of biological role, catalyzes the complicated ring closure reaction between the two acyclic compounds 1-deoxy-D-xylulose-5-phosphate (DXP) and 3-amino-2-oxopropyl phosphate (1-amino-acetone-3-phosphate or AAP) to form pyridoxine 5'-phosphate (PNP) and inorganic phosphate. The protein is Pyridoxine 5'-phosphate synthase of Aromatoleum aromaticum (strain DSM 19018 / LMG 30748 / EbN1) (Azoarcus sp. (strain EbN1)).